The following is a 347-amino-acid chain: Probable tRNA N6-adenosine threonylcarbamoyltransferase (347 aa).

A divalent metal cation contacts are provided by histidine 109, histidine 113, and tyrosine 130. Substrate is bound by residues 130 to 134 (YVSGG), aspartate 162, glycine 177, glutamate 181, and asparagine 277. Residue aspartate 305 participates in a divalent metal cation binding.

The protein belongs to the KAE1 / TsaD family. As to quaternary structure, component of the EKC/KEOPS complex; the whole complex dimerizes. Requires a divalent metal cation as cofactor.

Its subcellular location is the cytoplasm. The protein resides in the nucleus. It carries out the reaction L-threonylcarbamoyladenylate + adenosine(37) in tRNA = N(6)-L-threonylcarbamoyladenosine(37) in tRNA + AMP + H(+). Component of the EKC/KEOPS complex that is required for the formation of a threonylcarbamoyl group on adenosine at position 37 (t(6)A37) in tRNAs that read codons beginning with adenine. The complex is probably involved in the transfer of the threonylcarbamoyl moiety of threonylcarbamoyl-AMP (TC-AMP) to the N6 group of A37. Likely plays a direct catalytic role in this reaction, but requires other protein(s) of the complex to fulfill this activity. The protein is Probable tRNA N6-adenosine threonylcarbamoyltransferase of Drosophila melanogaster (Fruit fly).